The following is a 479-amino-acid chain: Kynurenine 3-monooxygenase (479 aa).

FAD contacts are provided by residues valine 19, 37–40 (YEAR), and alanine 57. Positions 85 and 99 each coordinate L-kynurenine. FAD-binding positions include arginine 111, leucine 136, threonine 172, aspartate 304, and 317 to 318 (MN). L-kynurenine is bound by residues asparagine 363 and tyrosine 398. The next 2 helical transmembrane spans lie at 385 to 404 (FLHA…VAFT) and 425 to 445 (GLFV…VHHL).

This sequence belongs to the aromatic-ring hydroxylase family. KMO subfamily. The cofactor is FAD. In terms of tissue distribution, expressed by organs containing secondary lymphoid tissue, such as the lung, spleen, mesenteric lymph node, thymus and peripheral lymph nodes.

The protein resides in the mitochondrion outer membrane. It carries out the reaction L-kynurenine + NADPH + O2 + H(+) = 3-hydroxy-L-kynurenine + NADP(+) + H2O. It participates in cofactor biosynthesis; NAD(+) biosynthesis; quinolinate from L-kynurenine: step 1/3. Its function is as follows. Catalyzes the hydroxylation of L-kynurenine (L-Kyn) to form 3-hydroxy-L-kynurenine (L-3OHKyn). Required for synthesis of quinolinic acid, a neurotoxic NMDA receptor antagonist and potential endogenous inhibitor of NMDA receptor signaling in axonal targeting, synaptogenesis and apoptosis during brain development. Quinolinic acid may also affect NMDA receptor signaling in pancreatic beta cells, osteoblasts, myocardial cells, and the gastrointestinal tract. The sequence is that of Kynurenine 3-monooxygenase from Mus musculus (Mouse).